The following is a 266-amino-acid chain: 3-methyl-2-oxobutanoate hydroxymethyltransferase (266 aa).

Residues Asp45 and Asp84 each contribute to the Mg(2+) site. Residues 45–46, Asp84, and Lys112 each bind 3-methyl-2-oxobutanoate; that span reads DS. Glu114 serves as a coordination point for Mg(2+). The Proton acceptor role is filled by Glu181.

This sequence belongs to the PanB family. As to quaternary structure, homodecamer; pentamer of dimers. Mg(2+) serves as cofactor.

It localises to the cytoplasm. The catalysed reaction is 3-methyl-2-oxobutanoate + (6R)-5,10-methylene-5,6,7,8-tetrahydrofolate + H2O = 2-dehydropantoate + (6S)-5,6,7,8-tetrahydrofolate. It functions in the pathway cofactor biosynthesis; (R)-pantothenate biosynthesis; (R)-pantoate from 3-methyl-2-oxobutanoate: step 1/2. Catalyzes the reversible reaction in which hydroxymethyl group from 5,10-methylenetetrahydrofolate is transferred onto alpha-ketoisovalerate to form ketopantoate. This chain is 3-methyl-2-oxobutanoate hydroxymethyltransferase, found in Pseudomonas savastanoi pv. phaseolicola (strain 1448A / Race 6) (Pseudomonas syringae pv. phaseolicola (strain 1448A / Race 6)).